The primary structure comprises 332 residues: Glycerol-3-phosphate dehydrogenase [NAD(P)+] (332 aa).

NADPH-binding residues include S11, F12, K32, and K106. Sn-glycerol 3-phosphate-binding residues include K106, G137, and S139. An NADPH-binding site is contributed by A141. Sn-glycerol 3-phosphate-binding residues include K192, D245, S255, R256, and N257. K192 functions as the Proton acceptor in the catalytic mechanism. Residue R256 participates in NADPH binding. NADPH contacts are provided by V280 and E282.

It belongs to the NAD-dependent glycerol-3-phosphate dehydrogenase family.

Its subcellular location is the cytoplasm. The catalysed reaction is sn-glycerol 3-phosphate + NAD(+) = dihydroxyacetone phosphate + NADH + H(+). It carries out the reaction sn-glycerol 3-phosphate + NADP(+) = dihydroxyacetone phosphate + NADPH + H(+). The protein operates within membrane lipid metabolism; glycerophospholipid metabolism. Catalyzes the reduction of the glycolytic intermediate dihydroxyacetone phosphate (DHAP) to sn-glycerol 3-phosphate (G3P), the key precursor for phospholipid synthesis. This Staphylococcus saprophyticus subsp. saprophyticus (strain ATCC 15305 / DSM 20229 / NCIMB 8711 / NCTC 7292 / S-41) protein is Glycerol-3-phosphate dehydrogenase [NAD(P)+].